A 120-amino-acid chain; its full sequence is UPF0715 membrane protein YwlA (120 aa).

Helical transmembrane passes span 3–23, 26–46, 63–83, and 95–115; these read YNYT…VIYI, FIIA…LIFA, LYLL…FGML, and AFYL…SVLL.

The protein belongs to the UPF0715 family.

Its subcellular location is the cell membrane. The sequence is that of UPF0715 membrane protein YwlA (ywlA) from Bacillus subtilis (strain 168).